We begin with the raw amino-acid sequence, 484 residues long: MAVLLRKVWGSVLARAAAGAAPPEAFAAAASPRRPQAAGEYGSLGALDVLPIDVLAQILRLLGPADAARSTAVCRAWRLLASDNGLWAFFLRLGPDPWELVVFAETHLGAGPALHPGLYYDSSPQLSFKHVYTRRAVVPGSIIVDGGSGYCKYGWSKYAAPSGRCATFLEFGNIESPMYARLRHFLSTIYTRMQVKPSTQPIIVVLPLCHSDDTESARASRKQYRDTLYSVLFDMNVPAVCSVDQAVLALYAAKRTSGIVVNIGFNATSIVPIFQGRVMHEIGVETVGQGALKLTGFLKELMQQRNITFESLYTVRTIKEKLCYVAADYEAEKRKDTQASCEVDGEGWFTLSEERFKTAEILFQPQIGGVRAMGLHKAVSLCMDHCYNSEVFGDDNWYKTVVLSGGSSCLPGLSERLEKELRELLPAHISEGIRVIPPPFGTDSAWFGAKMISNVSTFTEAWCIKKKQFRQKTRRNGPSFVNVW.

In terms of domain architecture, F-box spans L44–F90. Position 262 to 265 (N262 to F265) interacts with ATP.

It belongs to the actin family. Plant ARP8 subfamily.

Its subcellular location is the nucleus. It localises to the nucleolus. The protein localises to the cytoplasm. In Oryza sativa subsp. indica (Rice), this protein is Actin-related protein 8 (ARP8).